Here is a 509-residue protein sequence, read N- to C-terminus: Photosystem II CP47 reaction center protein (509 aa).

6 consecutive transmembrane segments (helical) span residues 21–36 (AVHL…WAGS), 101–115 (IGLS…IWHW), 140–156 (GIHL…FGAF), 203–218 (IAAG…FHLS), 237–252 (VLSS…AFIV), and 457–472 (SFAL…HGGR).

This sequence belongs to the PsbB/PsbC family. PsbB subfamily. As to quaternary structure, PSII is composed of 1 copy each of membrane proteins PsbA, PsbB, PsbC, PsbD, PsbE, PsbF, PsbH, PsbI, PsbJ, PsbK, PsbL, PsbM, PsbT, PsbX, PsbY, PsbZ, Psb30/Ycf12, at least 3 peripheral proteins of the oxygen-evolving complex and a large number of cofactors. It forms dimeric complexes. Requires Binds multiple chlorophylls. PSII binds additional chlorophylls, carotenoids and specific lipids. as cofactor.

It is found in the plastid. Its subcellular location is the cyanelle thylakoid membrane. One of the components of the core complex of photosystem II (PSII). It binds chlorophyll and helps catalyze the primary light-induced photochemical processes of PSII. PSII is a light-driven water:plastoquinone oxidoreductase, using light energy to abstract electrons from H(2)O, generating O(2) and a proton gradient subsequently used for ATP formation. The sequence is that of Photosystem II CP47 reaction center protein from Cyanophora paradoxa.